The chain runs to 587 residues: Kelch-like protein 3 (587 aa).

The segment at 1–22 (MDGESIKPSSQPLIQTGDDEKN) is disordered. A Phosphoserine modification is found at serine 10. The BTB domain maps to 50 to 117 (CDVMIVAEDV…IYTAEIEVTE (68 aa)). One can recognise a BACK domain in the interval 152–254 (CLGIRAFADV…PRDYLVQTVE (103 aa)). Threonine 295 bears the Phosphothreonine mark. Kelch repeat units lie at residues 302–347 (VMIV…FMAG), 348–394 (HVYA…VLND), 396–441 (LYAV…VVEG), 442–490 (KLYA…VLSG), 491–537 (QLYA…AVNG), and 539–585 (LYVV…VIHK). Position 375 is a phosphothreonine (threonine 375). A phosphoserine mark is found at serine 376 and serine 433.

It belongs to the KLHL3 family. Homodimer. Component of the BCR(KLHL3) E3 ubiquitin ligase complex, at least composed of CUL3 and KLHL3 and RBX1. Interacts with CLDN8. Phosphorylation at Ser-433 by PKA or PKC decreases the interaction with WNK1 and WNK4, leading to inhibit their degradation by the BCR(KLHL3) complex. Phosphorylated at Ser-433 by PKC in response to angiotensin II signaling, decreasing ability to promote degradation of WNK1 and WNK4, leading to activation of Na-Cl cotransporter SLC12A3/NCC. Phosphorylation at Ser-433 is increased by insulin. Dephosphorylated at Ser-433 by calcineurin PPP3CA, promoting degradation of WNK1 and WNK4.

It is found in the cytoplasm. The protein localises to the cytoskeleton. It localises to the cytosol. The protein operates within protein modification; protein ubiquitination. Substrate-specific adapter of a BCR (BTB-CUL3-RBX1) E3 ubiquitin ligase complex that acts as a regulator of ion transport in the distal nephron. The BCR(KLHL3) complex acts by mediating ubiquitination and degradation of WNK1 and WNK4, two activators of Na-Cl cotransporter SLC12A3/NCC in distal convoluted tubule cells of kidney, thereby regulating NaCl reabsorption. The BCR(KLHL3) complex also mediates ubiquitination and degradation of WNK3. The BCR(KLHL3) complex also mediates ubiquitination of CLDN8, a tight-junction protein required for paracellular chloride transport in the kidney, leading to its degradation. The chain is Kelch-like protein 3 (KLHL3) from Bos taurus (Bovine).